The primary structure comprises 940 residues: Isoleucine--tRNA ligase (940 aa).

Positions 58–68 match the 'HIGH' region motif; sequence PYANGNIHIGH. Glu563 provides a ligand contact to L-isoleucyl-5'-AMP. Positions 604 to 608 match the 'KMSKS' region motif; it reads KMSKS. Lys607 provides a ligand contact to ATP. Zn(2+) is bound by residues Cys903, Cys906, Cys923, and Cys926.

This sequence belongs to the class-I aminoacyl-tRNA synthetase family. IleS type 1 subfamily. Monomer. Zn(2+) serves as cofactor.

Its subcellular location is the cytoplasm. The catalysed reaction is tRNA(Ile) + L-isoleucine + ATP = L-isoleucyl-tRNA(Ile) + AMP + diphosphate. Functionally, catalyzes the attachment of isoleucine to tRNA(Ile). As IleRS can inadvertently accommodate and process structurally similar amino acids such as valine, to avoid such errors it has two additional distinct tRNA(Ile)-dependent editing activities. One activity is designated as 'pretransfer' editing and involves the hydrolysis of activated Val-AMP. The other activity is designated 'posttransfer' editing and involves deacylation of mischarged Val-tRNA(Ile). This Buchnera aphidicola subsp. Acyrthosiphon pisum (strain 5A) protein is Isoleucine--tRNA ligase.